The primary structure comprises 279 residues: 4-hydroxy-3-methylbut-2-enyl diphosphate reductase (279 aa).

C12 provides a ligand contact to [4Fe-4S] cluster. Residues H40 and H72 each coordinate (2E)-4-hydroxy-3-methylbut-2-enyl diphosphate. Residues H40 and H72 each contribute to the dimethylallyl diphosphate site. Residues H40 and H72 each coordinate isopentenyl diphosphate. C94 is a [4Fe-4S] cluster binding site. H122 contributes to the (2E)-4-hydroxy-3-methylbut-2-enyl diphosphate binding site. H122 contacts dimethylallyl diphosphate. H122 is a binding site for isopentenyl diphosphate. E124 (proton donor) is an active-site residue. T161 serves as a coordination point for (2E)-4-hydroxy-3-methylbut-2-enyl diphosphate. Residue C189 participates in [4Fe-4S] cluster binding. Residues S217, N219, and S261 each contribute to the (2E)-4-hydroxy-3-methylbut-2-enyl diphosphate site. The dimethylallyl diphosphate site is built by S217, N219, and S261. Positions 217, 219, and 261 each coordinate isopentenyl diphosphate.

Belongs to the IspH family. [4Fe-4S] cluster is required as a cofactor.

It catalyses the reaction isopentenyl diphosphate + 2 oxidized [2Fe-2S]-[ferredoxin] + H2O = (2E)-4-hydroxy-3-methylbut-2-enyl diphosphate + 2 reduced [2Fe-2S]-[ferredoxin] + 2 H(+). It carries out the reaction dimethylallyl diphosphate + 2 oxidized [2Fe-2S]-[ferredoxin] + H2O = (2E)-4-hydroxy-3-methylbut-2-enyl diphosphate + 2 reduced [2Fe-2S]-[ferredoxin] + 2 H(+). The protein operates within isoprenoid biosynthesis; dimethylallyl diphosphate biosynthesis; dimethylallyl diphosphate from (2E)-4-hydroxy-3-methylbutenyl diphosphate: step 1/1. It functions in the pathway isoprenoid biosynthesis; isopentenyl diphosphate biosynthesis via DXP pathway; isopentenyl diphosphate from 1-deoxy-D-xylulose 5-phosphate: step 6/6. In terms of biological role, catalyzes the conversion of 1-hydroxy-2-methyl-2-(E)-butenyl 4-diphosphate (HMBPP) into a mixture of isopentenyl diphosphate (IPP) and dimethylallyl diphosphate (DMAPP). Acts in the terminal step of the DOXP/MEP pathway for isoprenoid precursor biosynthesis. The polypeptide is 4-hydroxy-3-methylbut-2-enyl diphosphate reductase (Syntrophotalea carbinolica (strain DSM 2380 / NBRC 103641 / GraBd1) (Pelobacter carbinolicus)).